We begin with the raw amino-acid sequence, 35 residues long: uncharacterized protein (35 aa).

The segment covering 1–27 has biased composition (low complexity); it reads MDQNEANIYNENNENNENNENENCQNE. The segment at 1–35 is disordered; it reads MDQNEANIYNENNENNENNENENCQNEPIRIKIII.

This is an uncharacterized protein from Dictyostelium discoideum (Social amoeba).